A 309-amino-acid chain; its full sequence is HPr kinase/phosphorylase (309 aa).

Residues His-138 and Lys-159 contribute to the active site. Residue 153-160 (GQSGVGKS) participates in ATP binding. Ser-160 provides a ligand contact to Mg(2+). Residue Asp-177 is the Proton acceptor; for phosphorylation activity. Proton donor; for dephosphorylation activity of the active site. The interval 201-210 (LEIRGLGIIN) is important for the catalytic mechanism of both phosphorylation and dephosphorylation. Glu-202 is a binding site for Mg(2+). The active site involves Arg-243. Positions 264–269 (PVRPGR) are important for the catalytic mechanism of dephosphorylation.

It belongs to the HPrK/P family. As to quaternary structure, homohexamer. Mg(2+) is required as a cofactor.

It catalyses the reaction [HPr protein]-L-serine + ATP = [HPr protein]-O-phospho-L-serine + ADP + H(+). The enzyme catalyses [HPr protein]-O-phospho-L-serine + phosphate + H(+) = [HPr protein]-L-serine + diphosphate. Catalyzes the ATP- as well as the pyrophosphate-dependent phosphorylation of a specific serine residue in HPr, a phosphocarrier protein of the phosphoenolpyruvate-dependent sugar phosphotransferase system (PTS). HprK/P also catalyzes the pyrophosphate-producing, inorganic phosphate-dependent dephosphorylation (phosphorolysis) of seryl-phosphorylated HPr (P-Ser-HPr). The two antagonistic activities of HprK/P are regulated by several intracellular metabolites, which change their concentration in response to the absence or presence of rapidly metabolisable carbon sources (glucose, fructose, etc.) in the growth medium. Also phosphorylates/dephosphorylates the HPr-like catabolite repression protein crh on a specific serine residue. Therefore, by controlling the phosphorylation state of HPr and crh, HPrK/P is a sensor enzyme that plays a major role in the regulation of carbon metabolism and sugar transport: it mediates carbon catabolite repression (CCR), and regulates PTS-catalyzed carbohydrate uptake and inducer exclusion. The chain is HPr kinase/phosphorylase from Bacillus cytotoxicus (strain DSM 22905 / CIP 110041 / 391-98 / NVH 391-98).